The chain runs to 667 residues: UvrABC system protein B (667 aa).

A Helicase ATP-binding domain is found at 25–180; sequence DSLQNQHRFQ…LLRALVSVQY (156 aa). 38 to 45 provides a ligand contact to ATP; that stretch reads GATGTGKT. The short motif at 91 to 114 is the Beta-hairpin element; it reads YYDYYQPEAYIPVSDTYIEKSSSI. The region spanning 429-595 is the Helicase C-terminal domain; that stretch reads QVDDLLGEIK…PIVKRSSNSI (167 aa). The region spanning 626 to 661 is the UVR domain; it reads PELIQQLEAQMKEAAKNLEFESAAKYRDRIKQLRDK.

It belongs to the UvrB family. As to quaternary structure, forms a heterotetramer with UvrA during the search for lesions. Interacts with UvrC in an incision complex.

It is found in the cytoplasm. Functionally, the UvrABC repair system catalyzes the recognition and processing of DNA lesions. A damage recognition complex composed of 2 UvrA and 2 UvrB subunits scans DNA for abnormalities. Upon binding of the UvrA(2)B(2) complex to a putative damaged site, the DNA wraps around one UvrB monomer. DNA wrap is dependent on ATP binding by UvrB and probably causes local melting of the DNA helix, facilitating insertion of UvrB beta-hairpin between the DNA strands. Then UvrB probes one DNA strand for the presence of a lesion. If a lesion is found the UvrA subunits dissociate and the UvrB-DNA preincision complex is formed. This complex is subsequently bound by UvrC and the second UvrB is released. If no lesion is found, the DNA wraps around the other UvrB subunit that will check the other stand for damage. This chain is UvrABC system protein B, found in Microcystis aeruginosa (strain NIES-843 / IAM M-2473).